Consider the following 953-residue polypeptide: MITSAAGIISLLDEEEPQLKEFALHKLNAVVNDFWAEISESVDKIEVLYEDEGFRSRQFAALVASKVFYHLGAFEESLNYALGAGDLFNVNDNSEYVETIIAKCIDHYTKQCVENADLPEGEKKPIDQRLEGIVNKMFQRCLDDHKYKQAIGIALETRRLDVFEKTILESNDVPGMLAYSLKLCMSLMQNKQFRNKVLRVLVKIYMNLEKPDFINVCQCLIFLDDTQAVSDILEKLVKEDNLLMAYQICFDLYESASQQFLSSVIQNLRTVGTPIASVPGSTNTGTVPGPEKDSDSMETEEKTAGAVAGKTPDASPEPKDQTLKMIKILSGEMAIELHLQFLIRNNNTDLMILKNTKDAVRNSVCHTATVIANSFMHCGTTSDQFLRDNLEWLARATNWAKFTATASLGVIHKGHEKEALQLMATYLPKDTSPGSAYQEGGGLYALGLIHANHGGDIIDYLLNQLKNASNDIVRHGGSLGLGLAAMGTARQDVYDLLKTNLYQDDAVTGEAAGLALGLVMLGSKNTQAIEDMVGYAQETQHEKILRGLAVGIALVMYGRMEEADALIESLCRDKDPILRRSGMYTVAMAYCGSGNNKAIRRLLHVAVSDVNDDVRRAAVESLGFILFRTPEQCPSVVSLLSESYNPHVRYGAAMALGVCCAGTGNKEAINLLEPMTNDPVNYVRQGALIASALIMIQQTEITCPKVNQFRQLYSKVINDKHDDVMAKFGAILAQGILDAGGHNVTISLQSRTGHTHMPSVVGVLVFTQFWFWFPLSHFLSLAYTPTCIIGLNKDLKMPKVQYKSNCKPSTFAYPAPLEVPKEKEKEKVSTAVLSITAKAKKKEKEKEKKEEEKMEVDEAEKKEEKEKKKEPEPNFQLLDNPARVMPAQLKVLSMTETCRYQPFKPLSIGGIIILKDTSEDIEELVEPVAAHGPKIEEEEQEPEPPEPFEYIDD.

Position 1 is an N-acetylmethionine (Met1). Thr273 is subject to Phosphothreonine. Residues 277–319 (SVPGSTNTGTVPGPEKDSDSMETEEKTAGAVAGKTPDASPEPK) are disordered. Positions 290-303 (PEKDSDSMETEEKT) are enriched in basic and acidic residues. An N6-acetyllysine modification is found at Lys310. Residue Thr311 is modified to Phosphothreonine. Ser315 carries the phosphoserine modification. PC repeat units lie at residues 403-436 (TATASLGVIHKGHEKEALQLMATYLPKDTSPGSA), 441-474 (GGLYALGLIHANHGGDIIDYLLNQLKNASNDIVR), 476-510 (GGSLGLGLAAMGTARQDVYDLLKTNLYQDDAVTGE), 511-545 (AAGLALGLVMLGSKNTQAIEDMVGYAQETQHEKIL), 547-580 (GLAVGIALVMYGRMEEADALIESLCRDKDPILRR), 581-616 (SGMYTVAMAYCGSGNNKAIRRLLHVAVSDVNDDVRR), 617-649 (AAVESLGFILFRTPEQCPSVVSLLSESYNPHVR), 651-685 (GAAMALGVCCAGTGNKEAINLLEPMTNDPVNYVRQ), 686-726 (GALI…DVMA), and 729-761 (GAILAQGILDAGGHNVTISLQSRTGHTHMPSVV). Lys720 carries the N6-acetyllysine modification. The residue at position 830 (Thr830) is a Phosphothreonine. Ser834 is modified (phosphoserine). Disordered regions lie at residues 839–881 (AKKK…LDNP) and 930–953 (AHGPKIEEEEQEPEPPEPFEYIDD). 2 stretches are compositionally biased toward basic and acidic residues: residues 842-852 (KEKEKEKKEEE) and 859-872 (AEKKEEKEKKKEPE). Positions 936–953 (EEEEQEPEPPEPFEYIDD) are enriched in acidic residues.

The protein belongs to the proteasome subunit S1 family. Component of the 19S proteasome regulatory particle complex. The 26S proteasome consists of a 20S core particle (CP) and two 19S regulatory subunits (RP). The regulatory particle is made of a lid composed of 9 subunits, a base containing 6 ATPases and few additional components including PSMD1. Interacts with ADRM1. Interacts with ZFAND1.

Component of the 26S proteasome, a multiprotein complex involved in the ATP-dependent degradation of ubiquitinated proteins. This complex plays a key role in the maintenance of protein homeostasis by removing misfolded or damaged proteins, which could impair cellular functions, and by removing proteins whose functions are no longer required. Therefore, the proteasome participates in numerous cellular processes, including cell cycle progression, apoptosis, or DNA damage repair. This Rattus norvegicus (Rat) protein is 26S proteasome non-ATPase regulatory subunit 1 (Psmd1).